A 445-amino-acid polypeptide reads, in one-letter code: Phosphoglucosamine mutase (445 aa).

Catalysis depends on S99, which acts as the Phosphoserine intermediate. Residues S99, D242, D244, and D246 each contribute to the Mg(2+) site. A Phosphoserine modification is found at S99.

Belongs to the phosphohexose mutase family. The cofactor is Mg(2+). Activated by phosphorylation.

The enzyme catalyses alpha-D-glucosamine 1-phosphate = D-glucosamine 6-phosphate. In terms of biological role, catalyzes the conversion of glucosamine-6-phosphate to glucosamine-1-phosphate. This Sulfurovum sp. (strain NBC37-1) protein is Phosphoglucosamine mutase.